A 225-amino-acid polypeptide reads, in one-letter code: Two-component response regulator ARR8 (225 aa).

The Response regulatory domain maps to 10-145; sequence HVLAVDDSLF…DLTKLKPHMM (136 aa). Residue D78 is modified to 4-aspartylphosphate.

Belongs to the ARR family. Type-A subfamily. Post-translationally, two-component system major event consists of a His-to-Asp phosphorelay between a sensor histidine kinase (HK) and a response regulator (RR). In plants, the His-to-Asp phosphorelay involves an additional intermediate named Histidine-containing phosphotransfer protein (HPt). This multistep phosphorelay consists of a His-Asp-His-Asp sequential transfer of a phosphate group between first a His and an Asp of the HK protein, followed by the transfer to a conserved His of the HPt protein and finally the transfer to an Asp in the receiver domain of the RR protein. Predominantly expressed in roots.

Its subcellular location is the nucleus. In terms of biological role, functions as a response regulator involved in His-to-Asp phosphorelay signal transduction system. Phosphorylation of the Asp residue in the receiver domain activates the ability of the protein to promote the transcription of target genes. Type-A response regulators seem to act as negative regulators of the cytokinin signaling. The polypeptide is Two-component response regulator ARR8 (ARR8) (Arabidopsis thaliana (Mouse-ear cress)).